A 1194-amino-acid polypeptide reads, in one-letter code: DNA polymerase catalytic subunit (1194 aa).

Belongs to the DNA polymerase type-B family. As to quaternary structure, forms a complex with the ssDNA-binding protein, the DNA polymerase processivity factor, and the alkaline exonuclease. Interacts with the helicase-primase complex composed of the primase, the helicase and the primase-associated factor; this interaction may coordinate leading and lagging strand DNA synthesis at the replication fork.

Its subcellular location is the host nucleus. The enzyme catalyses DNA(n) + a 2'-deoxyribonucleoside 5'-triphosphate = DNA(n+1) + diphosphate. It carries out the reaction Endonucleolytic cleavage to 5'-phosphomonoester.. Replicates viral genomic DNA. The replication complex is composed of six viral proteins: the DNA polymerase, processivity factor, primase, primase-associated factor, helicase, and ssDNA-binding protein. Additionally, the polymerase contains an intrinsic ribonuclease H (RNase H) activity that specifically degrades RNA/DNA heteroduplexes or duplex DNA substrates in the 5' to 3' direction. Therefore, it can catalyze the excision of the RNA primers that initiate the synthesis of Okazaki fragments at a replication fork during viral DNA replication. This Varicella-zoster virus (strain Oka vaccine) (HHV-3) protein is DNA polymerase catalytic subunit.